Reading from the N-terminus, the 306-residue chain is Triplex capsid protein 2 (306 aa).

Belongs to the herpesviridae TRX2 protein family. As to quaternary structure, interacts with TRX1 and major capisd protein/MCP.

Its subcellular location is the virion. The protein localises to the host nucleus. Structural component of the T=16 icosahedral capsid. The capsid is composed of pentamers and hexamers of major capsid protein/MCP, which are linked together by heterotrimers called triplexes. These triplexes are formed by a single molecule of triplex protein 1/TRX1 and two copies of triplex protein 2/TRX2. Additionally, TRX1 is required for efficient transport of TRX2 to the nucleus, which is the site of capsid assembly. This is Triplex capsid protein 2 from Human cytomegalovirus (strain AD169) (HHV-5).